A 276-amino-acid chain; its full sequence is MDFWTAFQAIILGVVEGLTEFLPISSTGHQIIVADLIGFGGERAMAFNIIIQLAAILAVVWEFRRKILDVVFGLKSQPAARRFTANLLLAFMPAVVLGVLFADLIHEYLFNPITVATALVIGGVIMLWAERRTHSVAVDHVDDMRWSHALKIGFVQCLAMIPGTSRSGSTIIGGLLFGLSRKAATEFSFFLAMPTMVGAAVYSGYKYRDLFQPSDLPVFAIGFVTSFIFAMIAVRGLLKFIANHSYAAFAWYRIAFGLLILATWQFGWVDWSTAHG.

6 helical membrane-spanning segments follow: residues 43-63 (RAMA…VWEF), 85-105 (ANLL…ADLI), 109-129 (LFNP…MLWA), 183-203 (AATE…AVYS), 214-234 (SDLP…MIAV), and 249-269 (FAWY…FGWV).

The protein belongs to the UppP family.

It is found in the cell inner membrane. The catalysed reaction is di-trans,octa-cis-undecaprenyl diphosphate + H2O = di-trans,octa-cis-undecaprenyl phosphate + phosphate + H(+). Its function is as follows. Catalyzes the dephosphorylation of undecaprenyl diphosphate (UPP). Confers resistance to bacitracin. The chain is Undecaprenyl-diphosphatase from Pseudomonas putida (strain W619).